Consider the following 123-residue polypeptide: Protein Rev (123 aa).

S5 bears the Phosphoserine; by host CK2 mark. Residues I18–S26 form a homomultimerization region. Positions S25 to R50 are disordered. The short motif at S34 to R50 is the Nuclear localization signal and RNA-binding (RRE) element. Over residues R35 to Q49 the composition is skewed to basic residues. A Nuclear export signal and binding to XPO1 motif is present at residues L73–D84. The tract at residues S86–N123 is disordered. Residues S88–E101 show a composition bias toward polar residues. The residue at position 92 (S92) is a Phosphoserine; by host.

The protein belongs to the HIV-1 REV protein family. As to quaternary structure, homomultimer; when bound to the RRE. Multimeric assembly is essential for activity and may involve XPO1. Binds to human KPNB1, XPO1, TNPO1, RANBP5 and IPO7. Interacts with the viral Integrase. Interacts with human KHDRBS1. Interacts with human NAP1; this interaction decreases Rev multimerization and stimulates its activity. Interacts with human DEAD-box helicases DDX3 and DDX24; these interactions may serve for viral RNA export to the cytoplasm and packaging, respectively. Interacts with human PSIP1; this interaction may inhibit HIV-1 DNA integration by promoting dissociation of the Integrase-LEDGF/p75 complex. Asymmetrically arginine dimethylated at one site by host PRMT6. Methylation impairs the RNA-binding activity and export of viral RNA from the nucleus to the cytoplasm. In terms of processing, phosphorylated by protein kinase CK2. Presence of, and maybe binding to the N-terminus of the regulatory beta subunit of CK2 is necessary for CK2-mediated Rev's phosphorylation.

It is found in the host nucleus. Its subcellular location is the host nucleolus. The protein resides in the host cytoplasm. Its function is as follows. Escorts unspliced or incompletely spliced viral pre-mRNAs (late transcripts) out of the nucleus of infected cells. These pre-mRNAs carry a recognition sequence called Rev responsive element (RRE) located in the env gene, that is not present in fully spliced viral mRNAs (early transcripts). This function is essential since most viral proteins are translated from unspliced or partially spliced pre-mRNAs which cannot exit the nucleus by the pathway used by fully processed cellular mRNAs. Rev itself is translated from a fully spliced mRNA that readily exits the nucleus. Rev's nuclear localization signal (NLS) binds directly to KPNB1/Importin beta-1 without previous binding to KPNA1/Importin alpha-1. KPNB1 binds to the GDP bound form of RAN (Ran-GDP) and targets Rev to the nucleus. In the nucleus, the conversion from Ran-GDP to Ran-GTP dissociates Rev from KPNB1 and allows Rev's binding to the RRE in viral pre-mRNAs. Rev multimerization on the RRE via cooperative assembly exposes its nuclear export signal (NES) to the surface. Rev can then form a complex with XPO1/CRM1 and Ran-GTP, leading to nuclear export of the complex. Conversion from Ran-GTP to Ran-GDP mediates dissociation of the Rev/RRE/XPO1/RAN complex, so that Rev can return to the nucleus for a subsequent round of export. Beside KPNB1, also seems to interact with TNPO1/Transportin-1, RANBP5/IPO5 and IPO7/RANBP7 for nuclear import. The nucleoporin-like HRB/RIP is an essential cofactor that probably indirectly interacts with Rev to release HIV RNAs from the perinuclear region to the cytoplasm. The protein is Protein Rev of Human immunodeficiency virus type 1 group M subtype A (isolate U455) (HIV-1).